Consider the following 299-residue polypeptide: GTPase Era (299 aa).

Residues 4 to 171 (KSGFVAILGR…VDILSENLDE (168 aa)) form the Era-type G domain. The segment at 12 to 19 (GRPNVGKS) is G1. A GTP-binding site is contributed by 12-19 (GRPNVGKS). The G2 stretch occupies residues 38-42 (QTTRN). Residues 59–62 (DTPG) form a G3 region. GTP is bound by residues 59–63 (DTPGI) and 121–124 (NKID). Positions 121 to 124 (NKID) are G4. The G5 stretch occupies residues 150 to 152 (ISA). The KH type-2 domain maps to 202–280 (TREEIPHSVA…FLETWVKVKK (79 aa)).

Belongs to the TRAFAC class TrmE-Era-EngA-EngB-Septin-like GTPase superfamily. Era GTPase family. As to quaternary structure, monomer.

It localises to the cytoplasm. The protein localises to the cell membrane. An essential GTPase that binds both GDP and GTP, with rapid nucleotide exchange. Plays a role in 16S rRNA processing and 30S ribosomal subunit biogenesis and possibly also in cell cycle regulation and energy metabolism. In Streptococcus pneumoniae (strain P1031), this protein is GTPase Era.